Reading from the N-terminus, the 351-residue chain is S-adenosylmethionine:tRNA ribosyltransferase-isomerase (351 aa).

The protein belongs to the QueA family. Monomer.

The protein resides in the cytoplasm. It catalyses the reaction 7-aminomethyl-7-carbaguanosine(34) in tRNA + S-adenosyl-L-methionine = epoxyqueuosine(34) in tRNA + adenine + L-methionine + 2 H(+). It functions in the pathway tRNA modification; tRNA-queuosine biosynthesis. In terms of biological role, transfers and isomerizes the ribose moiety from AdoMet to the 7-aminomethyl group of 7-deazaguanine (preQ1-tRNA) to give epoxyqueuosine (oQ-tRNA). This Hahella chejuensis (strain KCTC 2396) protein is S-adenosylmethionine:tRNA ribosyltransferase-isomerase.